We begin with the raw amino-acid sequence, 359 residues long: Doublesex- and mab-3-related transcription factor B1 (359 aa).

A DNA-binding region (DM) is located at residues 7–54 (CSRCRNHGYLVPVKGHTGKCRWKQCICDKCYLITERQKIMAAQKVLRT). Disordered stretches follow at residues 111–149 (PPQAPSPGPSTFQLGPSGRPGPSTFQPGPGAPGGLRDRS) and 262–359 (SGLV…EQSN). Pro residues-rich tracts occupy residues 277–299 (CSPPPPPPPPPPPPLPAPPPQPQ) and 315–325 (LPPPPPPPSPP). Positions 348-359 (EPSQDSPQEQSN) are enriched in polar residues.

This sequence belongs to the DMRT family. As to expression, brain.

The protein localises to the nucleus. This chain is Doublesex- and mab-3-related transcription factor B1 (Dmrtb1), found in Mus musculus (Mouse).